The following is a 402-amino-acid chain: S-adenosylmethionine synthase (402 aa).

His-15 provides a ligand contact to ATP. Position 17 (Asp-17) interacts with Mg(2+). Residue Glu-43 coordinates K(+). L-methionine is bound by residues Glu-56 and Gln-99. Residues 99–109 are flexible loop; that stretch reads QSPDIAQGVDT. ATP contacts are provided by residues 174-176, 247-248, Asp-256, 262-263, Ala-279, and Lys-283; these read DGK, RF, and RK. Asp-256 is an L-methionine binding site. Residue Lys-287 coordinates L-methionine.

The protein belongs to the AdoMet synthase family. Homotetramer; dimer of dimers. The cofactor is Mg(2+). K(+) serves as cofactor.

It is found in the cytoplasm. It carries out the reaction L-methionine + ATP + H2O = S-adenosyl-L-methionine + phosphate + diphosphate. It participates in amino-acid biosynthesis; S-adenosyl-L-methionine biosynthesis; S-adenosyl-L-methionine from L-methionine: step 1/1. Functionally, catalyzes the formation of S-adenosylmethionine (AdoMet) from methionine and ATP. The overall synthetic reaction is composed of two sequential steps, AdoMet formation and the subsequent tripolyphosphate hydrolysis which occurs prior to release of AdoMet from the enzyme. This chain is S-adenosylmethionine synthase, found in Streptomyces coelicolor (strain ATCC BAA-471 / A3(2) / M145).